The primary structure comprises 435 residues: MVLPVVAIVGQPNVGKSTLFNRIINQRLAIVEDKPGVTRDRNYAQAEWMGHKFDLIDTGGITWEGGKIEDEIRAQAEIAIEEADVIVMLTNVVNHVTDLDERIARLLYRTKKPVILAVNKADNPEQRNDIYDFYSLGLGDPIPVSSSHGTGIGDLLDEIVNDFPAEKDSEADDVISFSMIGRPNVGKSSLVNKLLGEDRVIVANEEGTTRDAVDTPFTKDGIKFKVVDTAGIRRRGKVYEKTEKYSVLRAMSAIERSDVVLLVLDASTGIREQDKHVAGYAHEAGRGIIIVVNKWDLPEKNSTSAKEFEREIRSEFQYLDYAPILFVSAKTGQRIDQIPSMVKEVYDNQNQRIQSSVLNDLLLEASKLVPTPMIKGKRLRVYYMTQVSTNPPTFVVFVNDPELMHFSYERFLINQLRQNFDFTGTPIKILPRKRK.

2 EngA-type G domains span residues 4–167 (PVVA…PAEK) and 175–350 (ISFS…DNQN). Residues 10–17 (GQPNVGKS), 57–61 (DTGGI), 119–122 (NKAD), 181–188 (GRPNVGKS), 228–232 (DTAGI), and 293–296 (NKWD) each bind GTP. The 85-residue stretch at 351–435 (QRIQSSVLND…PIKILPRKRK (85 aa)) folds into the KH-like domain.

This sequence belongs to the TRAFAC class TrmE-Era-EngA-EngB-Septin-like GTPase superfamily. EngA (Der) GTPase family. Associates with the 50S ribosomal subunit.

Functionally, GTPase that plays an essential role in the late steps of ribosome biogenesis. The chain is GTPase Der from Lactobacillus acidophilus (strain ATCC 700396 / NCK56 / N2 / NCFM).